Reading from the N-terminus, the 179-residue chain is Apoptosis regulator Bcl-2 homolog (179 aa).

The short motif at 76–95 (ELFKDLINWGRICGFIVFSA) is the BH1 element. The BH2 signature appears at 126–141 (PWMISHGGQEEFLAFS).

This sequence belongs to the Bcl-2 family. Interacts with host BECN1 (via BH3 homology domain); this interaction allows the virus to inhibit BECN1, and thus autophagy. Interacts with host BID. Interacts with host BAX.

It is found in the host mitochondrion. The protein localises to the host endoplasmic reticulum. In terms of biological role, suppresses apoptosis in host cell to promote the viral replication. Has the ability to potentially bind to all the members of the proapoptotic Bcl-2 family. Inhibits autophagy by interacting with host Beclin 1 (BECN1). The sequence is that of Apoptosis regulator Bcl-2 homolog from Ornithodoros (relapsing fever ticks).